An 860-amino-acid polypeptide reads, in one-letter code: Alanine--tRNA ligase (860 aa).

His-563, His-567, Cys-665, and His-669 together coordinate Zn(2+). The disordered stretch occupies residues 824–843 (VGGKGGGRPDMAQAGGTDSS).

This sequence belongs to the class-II aminoacyl-tRNA synthetase family. The cofactor is Zn(2+).

It is found in the cytoplasm. It carries out the reaction tRNA(Ala) + L-alanine + ATP = L-alanyl-tRNA(Ala) + AMP + diphosphate. Its function is as follows. Catalyzes the attachment of alanine to tRNA(Ala) in a two-step reaction: alanine is first activated by ATP to form Ala-AMP and then transferred to the acceptor end of tRNA(Ala). Also edits incorrectly charged Ser-tRNA(Ala) and Gly-tRNA(Ala) via its editing domain. The polypeptide is Alanine--tRNA ligase (Vibrio vulnificus (strain YJ016)).